We begin with the raw amino-acid sequence, 1227 residues long: DNA-directed RNA polymerase subunit beta (1227 aa).

It belongs to the RNA polymerase beta chain family. As to quaternary structure, the RNAP catalytic core consists of 2 alpha, 1 beta, 1 beta' and 1 omega subunit. When a sigma factor is associated with the core the holoenzyme is formed, which can initiate transcription.

It carries out the reaction RNA(n) + a ribonucleoside 5'-triphosphate = RNA(n+1) + diphosphate. DNA-dependent RNA polymerase catalyzes the transcription of DNA into RNA using the four ribonucleoside triphosphates as substrates. In Chloroflexus aurantiacus (strain ATCC 29366 / DSM 635 / J-10-fl), this protein is DNA-directed RNA polymerase subunit beta.